The chain runs to 307 residues: NAD kinase 1 (307 aa).

D67 acts as the Proton acceptor in catalysis. Residues 67 to 68 (DG), 149 to 150 (NE), R160, D181, and 192 to 197 (TCYTSS) contribute to the NAD(+) site.

This sequence belongs to the NAD kinase family. A divalent metal cation is required as a cofactor.

The protein localises to the cytoplasm. It carries out the reaction NAD(+) + ATP = ADP + NADP(+) + H(+). Involved in the regulation of the intracellular balance of NAD and NADP, and is a key enzyme in the biosynthesis of NADP. Catalyzes specifically the phosphorylation on 2'-hydroxyl of the adenosine moiety of NAD to yield NADP. Essential for photoheterotrophic growth. Has a significant function in the oxidative pentose phosphate (OPP) pathway for glucose catabolism under photoheterotrophic conditions. Is also involved in cellular redox homeostasis. This is NAD kinase 1 from Synechocystis sp. (strain ATCC 27184 / PCC 6803 / Kazusa).